We begin with the raw amino-acid sequence, 412 residues long: Alpha-1-antiproteinase (412 aa).

Residues methionine 1 to alanine 24 form the signal peptide. Residue serine 33 is modified to Phosphoserine. 4 N-linked (GlcNAc...) asparagine glycosylation sites follow: asparagine 100, asparagine 133, asparagine 264, and asparagine 313. An RCL region spans residues alanine 367–lysine 386. A Phosphoserine modification is found at serine 377.

The protein belongs to the serpin family. Interacts with CELA2A. Interacts with ERGIC3 and LMAN1/ERGIC53. Interacts with PRSS1/Trypsin. Expressed not only in liver but also in kidney tubule cells, where it is regulated by androgens during development.

It localises to the secreted. Its function is as follows. Inhibitor of serine proteases. Its primary target is elastase, but it also has a moderate affinity for plasmin and thrombin. The chain is Alpha-1-antiproteinase (Serpina1) from Mus caroli (Ryukyu mouse).